A 241-amino-acid chain; its full sequence is Putative ABC transporter ATP-binding protein CA_C0773 (241 aa).

The ABC transporter domain occupies 2–241 (IKLEKVSFTY…REFLMECNII (240 aa)). Position 34–41 (34–41 (GPNGSGKS)) interacts with ATP.

The protein belongs to the ABC transporter superfamily.

The protein resides in the cell membrane. Functionally, probably part of an ABC transporter complex. Responsible for energy coupling to the transport system. The polypeptide is Putative ABC transporter ATP-binding protein CA_C0773 (Clostridium acetobutylicum (strain ATCC 824 / DSM 792 / JCM 1419 / IAM 19013 / LMG 5710 / NBRC 13948 / NRRL B-527 / VKM B-1787 / 2291 / W)).